The sequence spans 330 residues: G-protein coupled bile acid receptor 1 (330 aa).

Over 1-19 (MTPNSTGEVPSPIPKGALG) the chain is Extracellular. An N-linked (GlcNAc...) asparagine glycan is attached at Asn-4. Residues 20–40 (LSLALASLIITANLLLALGIA) traverse the membrane as a helical segment. Topologically, residues 41–50 (WDRRLRSPPA) are cytoplasmic. Residues 51–71 (GCFFLSLLLAGLLTGLALPTL) form a helical membrane-spanning segment. The Extracellular segment spans residues 72-85 (PGLWNQSRRGYWSC). A glycan (N-linked (GlcNAc...) asparagine) is linked at Asn-76. An intrachain disulfide couples Cys-85 to Cys-155. A helical membrane pass occupies residues 86–106 (LLVYLAPNFSFLSLLANLLLV). The Cytoplasmic segment spans residues 107–125 (HGERYMAVLRPLQPPGSIR). Residues 126–146 (LALLLTWAGPLLFASLPALGW) form a helical membrane-spanning segment. Residues 147–165 (NHWTPGANCSSQAIFPAPY) are Extracellular-facing. The helical transmembrane segment at 166–186 (LYLEVYGLLLPAVGAAAFLSV) threads the bilayer. Residues 187–228 (RVLATAHRQLQDICRLERAVCRDEPSALARALTWRQARAQAG) are Cytoplasmic-facing. A helical transmembrane segment spans residues 229-249 (AMLLFGLCWGPYVATLLLSVL). Residues 250 to 261 (AYEQRPPLGPGT) are Extracellular-facing. A helical membrane pass occupies residues 262-282 (LLSLLSLGSASAAAVPVAMGL). Topologically, residues 283-330 (GDQRYTAPWRAAAQRCLQGLWGRASRDSPGPSIAYHPSSQSSVDLDLN) are cytoplasmic. The interval 309–330 (DSPGPSIAYHPSSQSSVDLDLN) is disordered. Polar residues predominate over residues 319–330 (PSSQSSVDLDLN).

This sequence belongs to the G-protein coupled receptor 1 family. In terms of tissue distribution, ubiquitously expressed. Expressed at higher level in spleen and placenta. Expressed at lower level in other tissues. In digestive tissues, it is expressed in stomach, duodenum, ileocecum, ileum, jejunum, ascending colon, transverse colon, descending colon, cecum and liver, but not in esophagus and rectum.

The protein resides in the cell membrane. Its function is as follows. Receptor for bile acid. Bile acid-binding induces its internalization, activation of extracellular signal-regulated kinase and intracellular cAMP production. May be involved in the suppression of macrophage functions by bile acids. This is G-protein coupled bile acid receptor 1 (GPBAR1) from Homo sapiens (Human).